We begin with the raw amino-acid sequence, 684 residues long: Threonine--tRNA ligase (684 aa).

Residues 1–66 (MTVPATDSCP…DTDAEVVPVA (66 aa)) enclose the TGS domain. The segment at 261–567 (DHRKLGSELD…LTEHYAGAFP (307 aa)) is catalytic. Zn(2+)-binding residues include Cys-366, His-417, and His-544.

Belongs to the class-II aminoacyl-tRNA synthetase family. In terms of assembly, homodimer. The cofactor is Zn(2+).

It is found in the cytoplasm. The catalysed reaction is tRNA(Thr) + L-threonine + ATP = L-threonyl-tRNA(Thr) + AMP + diphosphate + H(+). Functionally, catalyzes the attachment of threonine to tRNA(Thr) in a two-step reaction: L-threonine is first activated by ATP to form Thr-AMP and then transferred to the acceptor end of tRNA(Thr). Also edits incorrectly charged L-seryl-tRNA(Thr). The polypeptide is Threonine--tRNA ligase (Mycolicibacterium paratuberculosis (strain ATCC BAA-968 / K-10) (Mycobacterium paratuberculosis)).